Reading from the N-terminus, the 288-residue chain is MTLRIRTIARMTGIREATLRAWERRYGFPRPLRSEGNNYRVYSREEVEAVRRVARLIQEEGLSVSEAIAQVKTEPPREQPEAERLRERFWSSVGALEGDEVTRVLDDAQTVMDVEAYCDGFLLPLLREMGVRLDVAREHLASALIRQRLRQVYDALSPAPAGPRALLACPSGDHHEGGLLVLGIHLKRKGWRVTMLGADTPAAALQGACVQVRPDVVALSFVRARAPEEFASVLEDALRACAPFPVVVGGLGAREHLKAIFSLGAQYAESSEELVAIWNQVRNAQNRP.

The HTH merR-type domain occupies 2–73 (TLRIRTIARM…VSEAIAQVKT (72 aa)). Positions 5–24 (IRTIARMTGIREATLRAWER) form a DNA-binding region, H-T-H motif. Residues 162–288 (GPRALLACPS…NQVRNAQNRP (127 aa)) form the B12-binding domain.

Belongs to the CarA/CarH B12-binding photoregulator family. Forms homodimers or oligomers. Interacts with CarS.

Its activity is regulated as follows. Binds cobalamin (vitamin B12), but cobalamin is not required for CarA activity. Interaction with CarS prevents binding to DNA. In terms of biological role, negative regulator of the carB operon in the dark. Binds specifically to the CarA operator, in the region around the carB promoter, which blocks access to the RNA polymerase. The protein is HTH-type transcriptional repressor CarA (carA) of Myxococcus xanthus.